We begin with the raw amino-acid sequence, 405 residues long: L-cysteine:1D-myo-inositol 2-amino-2-deoxy-alpha-D-glucopyranoside ligase (405 aa).

C43 contacts Zn(2+). L-cysteinyl-5'-AMP-binding positions include 43 to 46 (CGIT), T58, and 81 to 83 (NIT). A 'HIGH' region motif is present at residues 45 to 55 (ITPYDATHLGH). Residues 187–192 (ERGGDP) carry the 'ERGGDP' region motif. W227 is an L-cysteinyl-5'-AMP binding site. C231 contributes to the Zn(2+) binding site. Residue 249-251 (GSD) coordinates L-cysteinyl-5'-AMP. H256 is a Zn(2+) binding site. Residue I283 coordinates L-cysteinyl-5'-AMP. A 'KMSKS' region motif is present at residues 289–293 (KMSKS).

It belongs to the class-I aminoacyl-tRNA synthetase family. MshC subfamily. Monomer. The cofactor is Zn(2+).

The enzyme catalyses 1D-myo-inositol 2-amino-2-deoxy-alpha-D-glucopyranoside + L-cysteine + ATP = 1D-myo-inositol 2-(L-cysteinylamino)-2-deoxy-alpha-D-glucopyranoside + AMP + diphosphate + H(+). Functionally, catalyzes the ATP-dependent condensation of GlcN-Ins and L-cysteine to form L-Cys-GlcN-Ins. In Nakamurella multipartita (strain ATCC 700099 / DSM 44233 / CIP 104796 / JCM 9543 / NBRC 105858 / Y-104) (Microsphaera multipartita), this protein is L-cysteine:1D-myo-inositol 2-amino-2-deoxy-alpha-D-glucopyranoside ligase.